Here is a 459-residue protein sequence, read N- to C-terminus: Probable D-serine dehydratase (459 aa).

An N6-(pyridoxal phosphate)lysine modification is found at lysine 119.

Belongs to the serine/threonine dehydratase family. DsdA subfamily. It depends on pyridoxal 5'-phosphate as a cofactor.

The enzyme catalyses D-serine = pyruvate + NH4(+). The chain is Probable D-serine dehydratase from Geobacillus stearothermophilus (Bacillus stearothermophilus).